We begin with the raw amino-acid sequence, 555 residues long: Transcription factor kojR (555 aa).

Positions Cys21–Cys47 form a DNA-binding region, zn(2)-C6 fungal-type. Residues Pro51–Pro73 are disordered.

It is found in the nucleus. Functionally, transcription factor that regulates the gene cluster that mediates the biosynthesis of 5-hydroxy-2-hydroxymethyl-1,4-pyrone, also know as kojic acid, a by-product in the fermentation process of malting rice that acts as a chelation agent. Mediates the expression of kojA and kojT via binding of an 11-nucleotide palindromic sequence, 5'-CGRCTWAGYCG-3' (R=A/G, W=A/T, Y=C/T) within the target gene promoters. This Aspergillus flavus (strain ATCC 200026 / FGSC A1120 / IAM 13836 / NRRL 3357 / JCM 12722 / SRRC 167) protein is Transcription factor kojR.